A 177-amino-acid chain; its full sequence is Large ribosomal subunit protein uL6 (177 aa).

It belongs to the universal ribosomal protein uL6 family. Part of the 50S ribosomal subunit.

In terms of biological role, this protein binds to the 23S rRNA, and is important in its secondary structure. It is located near the subunit interface in the base of the L7/L12 stalk, and near the tRNA binding site of the peptidyltransferase center. The sequence is that of Large ribosomal subunit protein uL6 from Rubrobacter xylanophilus (strain DSM 9941 / JCM 11954 / NBRC 16129 / PRD-1).